We begin with the raw amino-acid sequence, 315 residues long: Ribosomal RNA small subunit methyltransferase H (315 aa).

Residues 37-39 (AGH), aspartate 57, tyrosine 84, aspartate 105, and glutamine 112 each bind S-adenosyl-L-methionine.

Belongs to the methyltransferase superfamily. RsmH family.

The protein localises to the cytoplasm. It carries out the reaction cytidine(1402) in 16S rRNA + S-adenosyl-L-methionine = N(4)-methylcytidine(1402) in 16S rRNA + S-adenosyl-L-homocysteine + H(+). In terms of biological role, specifically methylates the N4 position of cytidine in position 1402 (C1402) of 16S rRNA. This is Ribosomal RNA small subunit methyltransferase H from Lachnospira eligens (strain ATCC 27750 / DSM 3376 / VPI C15-48 / C15-B4) (Eubacterium eligens).